The chain runs to 186 residues: Glutathione-independent glyoxalase DJR-1.2 (186 aa).

Catalysis depends on residues Glu20, Cys105, and His124.

It belongs to the peptidase C56 family. DJ-1 subfamily. Expressed in various tissues, including pharyngeal muscles, pharynx-intestinal valve, ventral nerve cord, spermatheca, rectal gland, inner labial (IL) cells of head neurons, phasmid (PHA/PHB) neurons in tail and supporting sheath/socket cells, as well as in head mesodermal cells (HMC), excretory canals and coelomocytes.

The protein localises to the cytoplasm. The enzyme catalyses methylglyoxal + H2O = (R)-lactate + H(+). In terms of biological role, catalyzes the conversion of methylglyoxal (MG) or glyoxal (GO) to D-lactate or glycolic acid respectively in a single glutathione (GSH)-independent step. May play a role in detoxifying endogenously produced glyoxals. Involved in protection against glyoxal-induced cell death. Protects dopaminergic neurons from glyoxal-dependent neuronal degeneration. This Caenorhabditis elegans protein is Glutathione-independent glyoxalase DJR-1.2.